We begin with the raw amino-acid sequence, 126 residues long: Aspartate 1-decarboxylase (126 aa).

Ser-25 serves as the catalytic Schiff-base intermediate with substrate; via pyruvic acid. The residue at position 25 (Ser-25) is a Pyruvic acid (Ser). Thr-57 is a binding site for substrate. Tyr-58 acts as the Proton donor in catalysis. Gly-73–Ala-75 serves as a coordination point for substrate.

Belongs to the PanD family. As to quaternary structure, heterooctamer of four alpha and four beta subunits. It depends on pyruvate as a cofactor. In terms of processing, is synthesized initially as an inactive proenzyme, which is activated by self-cleavage at a specific serine bond to produce a beta-subunit with a hydroxyl group at its C-terminus and an alpha-subunit with a pyruvoyl group at its N-terminus.

Its subcellular location is the cytoplasm. The catalysed reaction is L-aspartate + H(+) = beta-alanine + CO2. Its pathway is cofactor biosynthesis; (R)-pantothenate biosynthesis; beta-alanine from L-aspartate: step 1/1. Catalyzes the pyruvoyl-dependent decarboxylation of aspartate to produce beta-alanine. This Edwardsiella ictaluri (strain 93-146) protein is Aspartate 1-decarboxylase.